The following is a 379-amino-acid chain: UDP-4-amino-4-deoxy-L-arabinose--oxoglutarate aminotransferase (379 aa).

K182 carries the post-translational modification N6-(pyridoxal phosphate)lysine.

It belongs to the DegT/DnrJ/EryC1 family. ArnB subfamily. As to quaternary structure, homodimer. Requires pyridoxal 5'-phosphate as cofactor.

It catalyses the reaction UDP-4-amino-4-deoxy-beta-L-arabinose + 2-oxoglutarate = UDP-beta-L-threo-pentopyranos-4-ulose + L-glutamate. Its pathway is nucleotide-sugar biosynthesis; UDP-4-deoxy-4-formamido-beta-L-arabinose biosynthesis; UDP-4-deoxy-4-formamido-beta-L-arabinose from UDP-alpha-D-glucuronate: step 2/3. It functions in the pathway bacterial outer membrane biogenesis; lipopolysaccharide biosynthesis. Functionally, catalyzes the conversion of UDP-4-keto-arabinose (UDP-Ara4O) to UDP-4-amino-4-deoxy-L-arabinose (UDP-L-Ara4N). The modified arabinose is attached to lipid A and is required for resistance to polymyxin and cationic antimicrobial peptides. This chain is UDP-4-amino-4-deoxy-L-arabinose--oxoglutarate aminotransferase, found in Salmonella dublin (strain CT_02021853).